The sequence spans 410 residues: MFPGSGRQTYQQQGYPPPQGAPQYNYGPPQGPPQGYYNGPPQGYNGPPQGPPPQNYNYGHYGPPQGQGQGYGQGGPAPQMYNNNRQSGAMNDVSTAPQRFGNTDMTYQLSNCSGRKKALLVGINYFGSSNELRGCVNDIKNMSNFLNRRFGYSYDDMVILTDDQNQRNKIPTKENIIRAMQWLVKDARPNDSLVFHYSGHGGITKDLDGDEDEGYDEVIYPVDFQQAGHIVDDDMHAIMVRPLPPGCKLTALFDSCHSGTALDLPFVYSTKGVVKEPNLWKDAGTDAFGAFMQYERGNIGGAISSIGGLLKKVTNSSSSNRQQVINIKASPADVISISGCKDDQTSADASINNNATGAMSWAFIKTMTDMPEQSYLSLLNNMRTLLKEKYSQKPQLSSSHPQDMNIRFIM.

Positions 1–94 are disordered; it reads MFPGSGRQTY…RQSGAMNDVS (94 aa). 2 stretches are compositionally biased toward low complexity: residues 21 to 47 and 55 to 64; these read APQY…YNGP and NYNYGHYGPP. The segment covering 65 to 75 has biased composition (gly residues); the sequence is QGQGQGYGQGG. Residues 80 to 94 show a composition bias toward polar residues; that stretch reads MYNNNRQSGAMNDVS. Active-site residues include His-200 and Cys-256.

The protein belongs to the peptidase C14B family.

Involved in cell death (apoptosis). This chain is Metacaspase-1 (MCA1), found in Meyerozyma guilliermondii (strain ATCC 6260 / CBS 566 / DSM 6381 / JCM 1539 / NBRC 10279 / NRRL Y-324) (Yeast).